A 549-amino-acid chain; its full sequence is Nucleoporin nup61 (549 aa).

Residues 1-32 (MSKRGADHQLTKDQDDSDDDRHGPVEVPKEAS) are compositionally biased toward basic and acidic residues. Disordered regions lie at residues 1–57 (MSKR…VSSP), 133–193 (IEKK…GFSA), and 207–438 (FTPK…NEDS). Position 17 is a phosphoserine (Ser17). The segment covering 40–50 (KIAKPKSRKRP) has biased composition (basic residues). Over residues 141–165 (QPTSNAVVSEVNPQQQKSQDSSSFV) the composition is skewed to polar residues. Composition is skewed to basic and acidic residues over residues 170-180 (ASSEKEDKEKP) and 217-228 (SATEAEAKEKET). Low complexity predominate over residues 229-244 (SSNQTATGTAATTTNQ). Composition is skewed to basic and acidic residues over residues 282 to 310 (ASKE…KSEN) and 328 to 339 (KPIKFDTPEKKF). Ser347 carries the post-translational modification Phosphoserine. Basic and acidic residues predominate over residues 407-421 (SEQEEKENGNDETRS). One can recognise a RanBD1 domain in the interval 416-549 (NDETRSNDSL…NEKKVSKSEN (134 aa)).

It localises to the nucleus. Its subcellular location is the nuclear pore complex. Functionally, functions as a component of the nuclear pore complex (NPC). NPC components, collectively referred to as nucleoporins (NUPs), can play the role of both NPC structural components and of docking or interaction partners for transiently associated nuclear transport factors. Active directional transport is assured by both, a Phe-Gly (FG) repeat affinity gradient for these transport factors across the NPC and a transport cofactor concentration gradient across the nuclear envelope. May play a role in mitotic spindle formation and/or function. This is Nucleoporin nup61 (nup61) from Schizosaccharomyces pombe (strain 972 / ATCC 24843) (Fission yeast).